We begin with the raw amino-acid sequence, 98 residues long: Small ribosomal subunit protein bS20 (98 aa).

Belongs to the bacterial ribosomal protein bS20 family.

Binds directly to 16S ribosomal RNA. The protein is Small ribosomal subunit protein bS20 of Kosmotoga olearia (strain ATCC BAA-1733 / DSM 21960 / TBF 19.5.1).